Reading from the N-terminus, the 155-residue chain is Telokin-like protein 20 homolog (155 aa).

A disordered region spans residues 109–155 (KRAVAPPHHEPEPVPAEEGAVADRAEPESGDAPPSPKKQKLDEREQD).

The protein is Telokin-like protein 20 homolog of Orgyia pseudotsugata multicapsid polyhedrosis virus (OpMNPV).